The primary structure comprises 337 residues: Ketol-acid reductoisomerase (NADP(+)) (337 aa).

Residues 3–183 (VEVFYDDDAD…GGTRAGAIRT (181 aa)) form the KARI N-terminal Rossmann domain. NADP(+)-binding positions include 26–29 (YGSQ), S52, S54, and 84–87 (DTAQ). Residue H109 is part of the active site. G135 lines the NADP(+) pocket. The KARI C-terminal knotted domain maps to 184–329 (TFTEETETDL…SKLRGMMSWV (146 aa)). D192, E196, E228, and E232 together coordinate Mg(2+). S253 serves as a coordination point for substrate.

Belongs to the ketol-acid reductoisomerase family. The cofactor is Mg(2+).

The catalysed reaction is (2R)-2,3-dihydroxy-3-methylbutanoate + NADP(+) = (2S)-2-acetolactate + NADPH + H(+). It catalyses the reaction (2R,3R)-2,3-dihydroxy-3-methylpentanoate + NADP(+) = (S)-2-ethyl-2-hydroxy-3-oxobutanoate + NADPH + H(+). It functions in the pathway amino-acid biosynthesis; L-isoleucine biosynthesis; L-isoleucine from 2-oxobutanoate: step 2/4. Its pathway is amino-acid biosynthesis; L-valine biosynthesis; L-valine from pyruvate: step 2/4. In terms of biological role, involved in the biosynthesis of branched-chain amino acids (BCAA). Catalyzes an alkyl-migration followed by a ketol-acid reduction of (S)-2-acetolactate (S2AL) to yield (R)-2,3-dihydroxy-isovalerate. In the isomerase reaction, S2AL is rearranged via a Mg-dependent methyl migration to produce 3-hydroxy-3-methyl-2-ketobutyrate (HMKB). In the reductase reaction, this 2-ketoacid undergoes a metal-dependent reduction by NADPH to yield (R)-2,3-dihydroxy-isovalerate. The protein is Ketol-acid reductoisomerase (NADP(+)) of Salinispora arenicola (strain CNS-205).